A 117-amino-acid polypeptide reads, in one-letter code: Large ribosomal subunit protein bL20c (117 aa).

It belongs to the bacterial ribosomal protein bL20 family.

It is found in the plastid. It localises to the chloroplast. In terms of biological role, binds directly to 23S ribosomal RNA and is necessary for the in vitro assembly process of the 50S ribosomal subunit. It is not involved in the protein synthesizing functions of that subunit. In Populus alba (White poplar), this protein is Large ribosomal subunit protein bL20c.